The following is a 242-amino-acid chain: Uridylate kinase (242 aa).

Residue 12–15 coordinates ATP; that stretch reads KLSG. The interval 20–25 is involved in allosteric activation by GTP; it reads GDEGFG. Gly-54 contacts UMP. ATP is bound by residues Gly-55 and Arg-59. Residues Asp-74 and 135 to 142 contribute to the UMP site; that span reads TGSPFFTT. ATP contacts are provided by Thr-162, Tyr-168, and Asp-171.

Belongs to the UMP kinase family. In terms of assembly, homohexamer.

It is found in the cytoplasm. The enzyme catalyses UMP + ATP = UDP + ADP. It functions in the pathway pyrimidine metabolism; CTP biosynthesis via de novo pathway; UDP from UMP (UMPK route): step 1/1. Its activity is regulated as follows. Allosterically activated by GTP. Inhibited by UTP. Catalyzes the reversible phosphorylation of UMP to UDP. The chain is Uridylate kinase from Pasteurella multocida (strain Pm70).